We begin with the raw amino-acid sequence, 267 residues long: Acetylglutamate kinase (267 aa).

Substrate-binding positions include 53-54, Arg75, and Asn167; that span reads GG.

Belongs to the acetylglutamate kinase family. ArgB subfamily.

The protein localises to the cytoplasm. The enzyme catalyses N-acetyl-L-glutamate + ATP = N-acetyl-L-glutamyl 5-phosphate + ADP. It participates in amino-acid biosynthesis; L-arginine biosynthesis; N(2)-acetyl-L-ornithine from L-glutamate: step 2/4. Catalyzes the ATP-dependent phosphorylation of N-acetyl-L-glutamate. This Shewanella pealeana (strain ATCC 700345 / ANG-SQ1) protein is Acetylglutamate kinase.